The sequence spans 365 residues: Protein YIM1 (365 aa).

This sequence belongs to the YIM1 family.

It is found in the lipid droplet. The protein localises to the mitochondrion. The sequence is that of Protein YIM1 (YIM1) from Saccharomyces cerevisiae (strain ATCC 204508 / S288c) (Baker's yeast).